A 229-amino-acid chain; its full sequence is Germin-like protein subfamily 1 member 7 (229 aa).

An N-terminal signal peptide occupies residues 1–24 (MEGFLRFLVAKAILLALASSFVSC). A disulfide bridge connects residues Cys-34 and Cys-50. Positions 64–215 (SGLNIAGNTI…AFQLDVNVVK (152 aa)) constitute a Cupin type-1 domain. N-linked (GlcNAc...) asparagine glycosylation is present at Asn-79. Mn(2+) contacts are provided by His-112, His-114, Glu-119, and His-161.

This sequence belongs to the germin family. In terms of assembly, oligomer (believed to be a pentamer but probably hexamer).

The protein localises to the secreted. The protein resides in the extracellular space. It localises to the apoplast. May play a role in plant defense. Probably has no oxalate oxidase activity even if the active site is conserved. The protein is Germin-like protein subfamily 1 member 7 of Arabidopsis thaliana (Mouse-ear cress).